Here is a 290-residue protein sequence, read N- to C-terminus: MEKLLQWSIANSQGDKEAMARAGQPDPKLLQQLFGGGGPDDPTLMKESMAVIMNPEVDLETKLVAFDNFEMLIENLDNANNIENLKLWEPLLDVLVQTKDEELRAAALSIIGTAVQNNLDSQNNFMKYDNGLRSLIEIASDKTKPLDVRTKAFYALSNLIRNHKDISEKFFKLNGLDCIAPVLSDNTAKPKLKMRAIALLTAYLSSVKIDENIISVLRKDGVIESTIECLSDESNLNIIDRVLSFLSHLISSGIKFNEQELHKLNEGYKHIEPLKDRLNEDDYLAVKYVL.

At S12 the chain carries Phosphoserine. 6 ARM repeats span residues 13-57, 76-116, 120-161, 164-205, 211-251, and 253-290; these read QGDK…NPEV, LDNA…TAVQ, DSQN…NLIR, KDIS…AYLS, ENII…HLIS, and GIKFNEQELHKLNEGYKHIEPLKDRLNEDDYLAVKYVL.

It belongs to the FES1 family. In terms of assembly, interacts with the Hsp70 chaperones SSA1 and SSB1.

The protein resides in the cytoplasm. Its function is as follows. Involved in protein translation, propagation of [PSI+] prions, and polyamine tolerance. Functions as a nucleotide exchange factor (NEF), which accelerates the release of ADP, for the cytosolic Hsp70 chaperone SSA1 and the ribosome-associated Hsp70 chaperone SSB1. Required for fully efficient Hsp70-mediated folding of proteins. The polypeptide is Hsp70 nucleotide exchange factor FES1 (FES1) (Saccharomyces cerevisiae (strain ATCC 204508 / S288c) (Baker's yeast)).